The sequence spans 413 residues: cAMP-dependent protein kinase regulatory subunit (413 aa).

Residues 1 to 145 (MADSSSFPGT…DSWTPPCHPK (145 aa)) are disordered. The interval 24–161 (SPIQKISEEE…RLKTAVSNNF (138 aa)) is dimerization and phosphorylation. A compositionally biased stretch (low complexity) spans 58–67 (GNSFNGDNGS). The segment covering 121–138 (TSVSAESLNPTSAGSDSW) has biased composition (polar residues). The residue at position 122 (S122) is a Phosphoserine. 3',5'-cyclic AMP-binding positions include 162 to 291 (LFSH…FLEE), E240, R249, 294 to 413 (LLSS…PSPS), E361, and R370.

It belongs to the cAMP-dependent kinase regulatory chain family. As to quaternary structure, tetramer, composed of 2 regulatory (R) and 2 catalytic (C) subunits. In the presence of cAMP it dissociates into 2 active monomeric C subunits and an R dimer.

This is cAMP-dependent protein kinase regulatory subunit (pkaR) from Aspergillus fumigatus (strain ATCC MYA-4609 / CBS 101355 / FGSC A1100 / Af293) (Neosartorya fumigata).